A 640-amino-acid chain; its full sequence is UvrABC system protein C (640 aa).

The 80-residue stretch at 22-101 folds into the GIY-YIG domain; that stretch reads NDPGCYLMKD…IKSHQPYFNV (80 aa). One can recognise a UVR domain in the interval 211 to 246; it reads DELRILLEKQMISFSESLKFEEAGSVRDQLKGIDRL.

This sequence belongs to the UvrC family. Interacts with UvrB in an incision complex.

Its subcellular location is the cytoplasm. In terms of biological role, the UvrABC repair system catalyzes the recognition and processing of DNA lesions. UvrC both incises the 5' and 3' sides of the lesion. The N-terminal half is responsible for the 3' incision and the C-terminal half is responsible for the 5' incision. This is UvrABC system protein C from Prochlorococcus marinus (strain NATL2A).